Here is a 2134-residue protein sequence, read N- to C-terminus: Genome polyprotein (2134 aa).

Residues 1–1377 (MSKLFSTVGK…WLFEKIKTSK (1377 aa)) lie on the Cytoplasmic side of the membrane. Residues 781-882 (IVSCSGEKAK…GDYGTKEGEK (102 aa)) enclose the LRAT domain. Active-site residues include H791 and H802. C863 acts as the Acyl-thioester intermediate in catalysis. The SF3 helicase domain occupies 1127–1289 (LNKLGRLDKP…EEFSTHAMLD (163 aa)). 1153 to 1160 (GNRGGGKS) is an ATP binding site. The stretch at 1378–1392 (WYILGCVGAVLSVSV) is an intramembrane region. Topologically, residues 1393-2134 (LGVFAYHMIK…VKYRFIDDSF (742 aa)) are cytoplasmic. Residue Y1415 is modified to O-(5'-phospho-RNA)-tyrosine. The region spanning 1431–1643 (DAQSVVDISN…ITKEMIEEML (213 aa)) is the Peptidase C3 domain. Catalysis depends on for protease 3C activity residues H1477, D1515, and C1603. One can recognise a RdRp catalytic domain in the interval 1880-2001 (DLVVGLDFSN…CIKKEYLDQK (122 aa)).

Belongs to the picornaviridae polyprotein family. Specific enzymatic cleavages by the viral protease in vivo yield a variety of precursors and mature proteins. During virion maturation, non-infectious particles are rendered infectious following cleavage of VP0. This maturation cleavage is followed by a conformational change of the particle. In terms of processing, VPg is uridylylated by the polymerase and is covalently linked to the 5'-end of genomic RNA. This uridylylated form acts as a nucleotide-peptide primer for the polymerase.

The protein resides in the virion. The protein localises to the host cytoplasm. It localises to the host cytoplasmic vesicle membrane. The catalysed reaction is RNA(n) + a ribonucleoside 5'-triphosphate = RNA(n+1) + diphosphate. It carries out the reaction a ribonucleoside 5'-triphosphate + H2O = a ribonucleoside 5'-diphosphate + phosphate + H(+). It catalyses the reaction Selective cleavage of Gln-|-Gly bond in the poliovirus polyprotein. In other picornavirus reactions Glu may be substituted for Gln, and Ser or Thr for Gly.. Its function is as follows. Capsid proteins VP1, VP2, and VP3 form a closed capsid enclosing the viral positive strand RNA genome. All these proteins contain a beta-sheet structure called beta-barrel jelly roll. Together they form an icosahedral capsid (T=3) composed of 60 copies of each VP1, VP2, and VP3, with a diameter of approximately 300 Angstroms. VP1 is situated at the 12 fivefold axes, whereas VP2 and VP3 are located at the quasi-sixfold axes. VP0 precursor is a component of immature procapsids. The N-terminal domain of VP0, protein VP4, is needed for the assembly of 12 pentamers into the icosahedral structure. Unlike other picornaviruses, AEV VP4 may not be myristoylated. Functionally, protein 2B and 2BC precursor affect membrane integrity and cause an increase in membrane permeability. In terms of biological role, associates with and induces structural rearrangements of intracellular membranes. It displays RNA-binding, nucleotide binding and NTPase activities. Its function is as follows. Protein 3A, via its hydrophobic domain, serves as membrane anchor. Protein 3B is covalently linked to the 5'-end of both the positive-strand and negative-strand genomic RNAs. It acts as a genome-linked replication primer. Functionally, cysteine protease that generates mature viral proteins from the precursor polyprotein. In addition to its proteolytic activity, it binds to viral RNA, and thus influences viral genome replication. RNA and substrate bind cooperatively to the protease. In terms of biological role, RNA-directed RNA polymerase 3D-POL replicates genomic and antigenomic RNA by recognizing replications specific signals. The polypeptide is Genome polyprotein (Avian encephalomyelitis virus (strain Calnek vaccine) (AEV)).